Here is a 206-residue protein sequence, read N- to C-terminus: Thiamine-phosphate synthase (206 aa).

4-amino-2-methyl-5-(diphosphooxymethyl)pyrimidine contacts are provided by residues 38 to 42 and Asn70; that span reads QLRAK. Mg(2+)-binding residues include Asp71 and Asp90. Ser107 serves as a coordination point for 4-amino-2-methyl-5-(diphosphooxymethyl)pyrimidine. A 2-[(2R,5Z)-2-carboxy-4-methylthiazol-5(2H)-ylidene]ethyl phosphate-binding site is contributed by 133-135; that stretch reads TTT. Position 136 (Lys136) interacts with 4-amino-2-methyl-5-(diphosphooxymethyl)pyrimidine. 2-[(2R,5Z)-2-carboxy-4-methylthiazol-5(2H)-ylidene]ethyl phosphate-binding positions include Gly164 and 184–185; that span reads VS.

Belongs to the thiamine-phosphate synthase family. It depends on Mg(2+) as a cofactor.

The enzyme catalyses 2-[(2R,5Z)-2-carboxy-4-methylthiazol-5(2H)-ylidene]ethyl phosphate + 4-amino-2-methyl-5-(diphosphooxymethyl)pyrimidine + 2 H(+) = thiamine phosphate + CO2 + diphosphate. It catalyses the reaction 2-(2-carboxy-4-methylthiazol-5-yl)ethyl phosphate + 4-amino-2-methyl-5-(diphosphooxymethyl)pyrimidine + 2 H(+) = thiamine phosphate + CO2 + diphosphate. The catalysed reaction is 4-methyl-5-(2-phosphooxyethyl)-thiazole + 4-amino-2-methyl-5-(diphosphooxymethyl)pyrimidine + H(+) = thiamine phosphate + diphosphate. The protein operates within cofactor biosynthesis; thiamine diphosphate biosynthesis; thiamine phosphate from 4-amino-2-methyl-5-diphosphomethylpyrimidine and 4-methyl-5-(2-phosphoethyl)-thiazole: step 1/1. Condenses 4-methyl-5-(beta-hydroxyethyl)thiazole monophosphate (THZ-P) and 2-methyl-4-amino-5-hydroxymethyl pyrimidine pyrophosphate (HMP-PP) to form thiamine monophosphate (TMP). This is Thiamine-phosphate synthase from Herpetosiphon aurantiacus (strain ATCC 23779 / DSM 785 / 114-95).